The following is a 179-amino-acid chain: MAELSTVARPYAEALFGAACDDKAGLVSWADLVGELAQVAANADVREAMTDPRLNDAQRAQVFTSLIKSPLPQAARNFIDLLVQNDRLLLLPIIATQFVDLKNRYEGTAQAEITSAFELSDAQVKELIAALEVKFGLKLKPQVTIDPSLIGGVRVAVGDQVLDTSVKAQLARLRDTLAA.

This sequence belongs to the ATPase delta chain family. As to quaternary structure, F-type ATPases have 2 components, F(1) - the catalytic core - and F(0) - the membrane proton channel. F(1) has five subunits: alpha(3), beta(3), gamma(1), delta(1), epsilon(1). F(0) has three main subunits: a(1), b(2) and c(10-14). The alpha and beta chains form an alternating ring which encloses part of the gamma chain. F(1) is attached to F(0) by a central stalk formed by the gamma and epsilon chains, while a peripheral stalk is formed by the delta and b chains.

The protein localises to the cell inner membrane. Functionally, f(1)F(0) ATP synthase produces ATP from ADP in the presence of a proton or sodium gradient. F-type ATPases consist of two structural domains, F(1) containing the extramembraneous catalytic core and F(0) containing the membrane proton channel, linked together by a central stalk and a peripheral stalk. During catalysis, ATP synthesis in the catalytic domain of F(1) is coupled via a rotary mechanism of the central stalk subunits to proton translocation. This protein is part of the stalk that links CF(0) to CF(1). It either transmits conformational changes from CF(0) to CF(1) or is implicated in proton conduction. This Bordetella avium (strain 197N) protein is ATP synthase subunit delta.